A 425-amino-acid chain; its full sequence is WD repeat-containing protein jip5 (425 aa).

WD repeat units lie at residues 9 to 48 (PLSA…AASD), 72 to 111 (RHKG…VENK), 117 to 158 (EKNG…SKVS), 221 to 262 (ISST…DQDE), and 318 to 355 (DETE…ADRY). The segment at 40–63 (LPTDEAASDDDETSNASSRNGRGH) is disordered. A disordered region spans residues 358–425 (MPGEKRMYGD…LDSMESSVVY (68 aa)). Acidic residues predominate over residues 367 to 385 (DSDDSDEGDDSDDDSDDSD). The segment covering 395–404 (NKRKKTKAKG) has biased composition (basic residues).

This sequence belongs to the WD repeat WDR55 family.

Its subcellular location is the nucleus. It localises to the nucleolus. The polypeptide is WD repeat-containing protein jip5 (jip5) (Aspergillus niger (strain ATCC MYA-4892 / CBS 513.88 / FGSC A1513)).